The chain runs to 318 residues: Replication factor C small subunit (318 aa).

ATP is bound at residue 43–50 (GSVGTGKT).

This sequence belongs to the activator 1 small subunits family. RfcS subfamily. As to quaternary structure, heteromultimer composed of small subunits (RfcS) and large subunits (RfcL).

Functionally, part of the RFC clamp loader complex which loads the PCNA sliding clamp onto DNA. The sequence is that of Replication factor C small subunit from Thermoplasma acidophilum (strain ATCC 25905 / DSM 1728 / JCM 9062 / NBRC 15155 / AMRC-C165).